A 294-amino-acid polypeptide reads, in one-letter code: Protein C3orf33 homolog (294 aa).

N-acetylalanine is present on Ala-2. The helical transmembrane segment at 36-53 (LVQNISTGMAIAGIMLLI) threads the bilayer. The segment at 244 to 271 (KPAGADLGSTKDSYHDSRRRASGKGKDS) is disordered.

The protein resides in the membrane. May play a role in transcription regulation. This is Protein C3orf33 homolog from Mus musculus (Mouse).